The chain runs to 805 residues: Na(+)/H(+) antiporter subunit A (805 aa).

21 consecutive transmembrane segments (helical) span residues 4–22 (LHWA…PFLY), 29–51 (HTGW…YLSI), 80–102 (SLLF…IFYL), 109–128 (LNNF…GVVL), 132–154 (LIVL…SYWF), 167–189 (MLIT…VMTG), 209–231 (FLPA…PFHI), 244–266 (SAYL…LTPV), 271–293 (AEWF…TSAV), 300–322 (GILA…LGSA), 332–354 (PAFY…TFKG), 375–397 (LGGL…ASMA), 431–453 (IIIV…IMFF), 474–496 (IGML…FPNI), 529–551 (GFNA…FLMM), 597–614 (YFAY…YTMF), 629–651 (IAPY…PFIN), 656–674 (AVVV…FVVF), 679–701 (LALT…FYHL), 714–736 (NVLN…LSSL), and 778–795 (MLEV…IALI).

The protein belongs to the CPA3 antiporters (TC 2.A.63) subunit A family. As to quaternary structure, forms a heterooligomeric complex that consists of seven subunits: MrpA, MrpB, MrpC, MrpD, MrpE, MrpF and MrpG.

The protein localises to the cell membrane. Mnh complex is a Na(+)Li(+)/H(+) antiporter involved in Na(+) and/or Li(+) excretion and Na(+) resistance. Na(+)/H(+) antiport consumes a transmembrane electrical potential, and is thus inferred to be electrogenic. Does not transport K(+), Ca(2+) or Mg(2+). The protein is Na(+)/H(+) antiporter subunit A (mrpA) of Alkalihalophilus pseudofirmus (strain ATCC BAA-2126 / JCM 17055 / OF4) (Bacillus pseudofirmus).